We begin with the raw amino-acid sequence, 168 residues long: NADH-quinone oxidoreductase subunit I (168 aa).

4Fe-4S ferredoxin-type domains are found at residues 58–88 and 99–128; these read LRTY…IEAQ and VRYD…EGPN. Residues C68, C71, C74, C78, C108, C111, C114, and C118 each contribute to the [4Fe-4S] cluster site.

It belongs to the complex I 23 kDa subunit family. NDH-1 is composed of 14 different subunits. Subunits NuoA, H, J, K, L, M, N constitute the membrane sector of the complex. [4Fe-4S] cluster serves as cofactor.

It localises to the cell inner membrane. It carries out the reaction a quinone + NADH + 5 H(+)(in) = a quinol + NAD(+) + 4 H(+)(out). Functionally, NDH-1 shuttles electrons from NADH, via FMN and iron-sulfur (Fe-S) centers, to quinones in the respiratory chain. The immediate electron acceptor for the enzyme in this species is believed to be ubiquinone. Couples the redox reaction to proton translocation (for every two electrons transferred, four hydrogen ions are translocated across the cytoplasmic membrane), and thus conserves the redox energy in a proton gradient. The protein is NADH-quinone oxidoreductase subunit I of Ehrlichia ruminantium (strain Gardel).